Reading from the N-terminus, the 248-residue chain is MIVLVTGATAGFGECIARRFVENGHKVIATGRRHERLQALKDELGENVLTAQLDVRNRAAIEEMMASLPAQWRDIDVLVNNAGLALGLEPAHKASVEDWETMIDTNNKGLIYMTRAVLPGMVERNRGHIINIGSTAGSWPYAGGNVYGATKAFVRQFSLNLRTDLHGTAVRVTDIEPGLVGGTEFSSVRFKGDDEKAGKTYENTTALTPEDITEAVWWVATLPAHVNINTVEMMPVTQSFAGLSVHRS.

Residues 7-12, 32-33, 54-55, and Asn-81 each bind NADP(+); these read GATAGF, RR, and DV. Ser-134 contacts substrate. NADP(+) contacts are provided by residues Tyr-147, Lys-151, and 177-185; that span reads PGLVGGTEF. The active-site Proton acceptor is the Tyr-147.

This sequence belongs to the short-chain dehydrogenases/reductases (SDR) family. Homotetramer.

It catalyses the reaction 3-hydroxypropanoate + NADP(+) = 3-oxopropanoate + NADPH + H(+). It carries out the reaction L-allo-threonine + NADP(+) = aminoacetone + CO2 + NADPH. NADP-dependent dehydrogenase with broad substrate specificity acting on 3-hydroxy acids. Catalyzes the NADP-dependent oxidation of L-allo-threonine to L-2-amino-3-keto-butyrate, which is spontaneously decarboxylated into aminoacetone. Also acts on D-threonine, L-serine, D-serine, D-3-hydroxyisobutyrate, L-3-hydroxyisobutyrate, D-glycerate and L-glycerate. Able to catalyze the reduction of the malonic semialdehyde to 3-hydroxypropionic acid. YdfG is apparently supplementing RutE, the presumed malonic semialdehyde reductase involved in pyrimidine degradation since both are able to detoxify malonic semialdehyde. The sequence is that of NADP-dependent 3-hydroxy acid dehydrogenase YdfG from Salmonella typhi.